Here is a 270-residue protein sequence, read N- to C-terminus: Urease accessory protein UreD (270 aa).

It belongs to the UreD family. UreD, UreF and UreG form a complex that acts as a GTP-hydrolysis-dependent molecular chaperone, activating the urease apoprotein by helping to assemble the nickel containing metallocenter of UreC. The UreE protein probably delivers the nickel.

It is found in the cytoplasm. Functionally, required for maturation of urease via the functional incorporation of the urease nickel metallocenter. The protein is Urease accessory protein UreD of Microcystis aeruginosa (strain NIES-843 / IAM M-2473).